The chain runs to 182 residues: MMRRSPSGLKSPRVSQGRKPRDPESLLFLRCCLGSEPHNLSSLLSPEAGQEPLPKLLPQPLAGHAAWGIHGVPTSLLLAGECWGQGMAVPADPPPASPYRTSPRPPPGPLPRYRPQQHLLLPLGRLHALCPGCPLQQSLQFERGTLSAPRLWSWMKLETIILSKLSQGQKTKHRMFSLISES.

Disordered stretches follow at residues 1-22 (MMRR…KPRD) and 89-108 (VPAD…PPPG). The span at 91–108 (ADPPPASPYRTSPRPPPG) shows a compositional bias: pro residues. In terms of domain architecture, DUF1725 spans 154-167 (WMKLETIILSKLSQ).

This is Proline-rich protein, Y-linked (PRORY) from Homo sapiens (Human).